The following is an 82-amino-acid chain: Small ribosomal subunit protein bS18 (82 aa).

Residues 1–25 (MADTSSSQARRPFHRRRKTCPFSGA) are disordered.

The protein belongs to the bacterial ribosomal protein bS18 family. Part of the 30S ribosomal subunit. Forms a tight heterodimer with protein bS6.

Binds as a heterodimer with protein bS6 to the central domain of the 16S rRNA, where it helps stabilize the platform of the 30S subunit. The polypeptide is Small ribosomal subunit protein bS18 (Agrobacterium fabrum (strain C58 / ATCC 33970) (Agrobacterium tumefaciens (strain C58))).